A 542-amino-acid chain; its full sequence is TNF receptor-associated factor 6 (542 aa).

Residues 1-374 (MSLLHCENSC…EAQQCNGIYI (374 aa)) are interaction with TAX1BP1. The RING-type; degenerate zinc finger occupies 71-110 (CPICLMALREAVQTPCGHRFCKACIIKSIRDAGHKCPVDN). Lys125 participates in a covalent cross-link: Glycyl lysine isopeptide (Lys-Gly) (interchain with G-Cter in SUMO); alternate. A Glycyl lysine isopeptide (Lys-Gly) (interchain with G-Cter in ubiquitin); alternate cross-link involves residue Lys125. Lys143 is covalently cross-linked (Glycyl lysine isopeptide (Lys-Gly) (interchain with G-Cter in SUMO)). TRAF-type zinc fingers lie at residues 151-203 (EHQA…EDKE) and 204-260 (IHEQ…NHLA). Residues 310–368 (SEVHNFQETIQQLEGRLVRQDHQIRELTAKMETQSMYVNELKRTIRTLEDKVAEIEAQQ) adopt a coiled-coil conformation. Lys339 is covalently cross-linked (Glycyl lysine isopeptide (Lys-Gly) (interchain with G-Cter in ubiquitin)). The region spanning 370–519 (NGIYIWKIGN…DDTLLVRCEV (150 aa)) is the MATH domain. The interval 375-542 (WKIGNFGMHL…FQPRSTDSGI (168 aa)) is interaction with TANK. Lys473 participates in a covalent cross-link: Glycyl lysine isopeptide (Lys-Gly) (interchain with G-Cter in SUMO).

This sequence belongs to the TNF receptor-associated factor family. A subfamily. Homotrimer. Homooligomer. N-terminal region is dimeric while C-terminal region is trimeric; maybe providing a mode of oligomerization. Upon IL1B treatment, forms a complex with PELI1, IRAK1, IRAK4 and MYD88; this complex recruits MAP3K7/TAK1, TAB1 and TAB2 to mediate NF-kappa-B activation. Direct binding of SMAD6 to PELI1 prevents the complex formation and hence negatively regulates IL1R-TLR signaling and eventually NF-kappa-B-mediated gene expression. Binds to TNFRSF5/CD40 and TNFRSF11A/RANK. Associates with NGFR, TNFRSF17, IRAK2, IRAK3, RIPK2, MAP3K1, MAP3K5, MAP3K14, CSK, TRAF, TRAF-interacting protein TRIP and TNF receptor associated protein TDP2. Interacts with IL17R. Interacts with SQSTM1 bridging NTRK1 and NGFR. Forms a ternary complex with SQSTM1 and PRKCZ. Interacts with PELI2 and PELI3. Binds UBE2V1. Interacts with TAX1BP1; this interaction mediates deubiquitination of TRAF6 and inhibition of NF-kappa-B activation. Interacts with ZNF675. Interacts with ARRB1 and ARRB2. Interacts with MAP3K7 and TAB1/MAP3K7IP1; during IL-1 signaling. Interacts with UBE2N. Interacts with TGFBR1, HDAC1 and RANGAP1. Interacts with AKT1, AKT2 and AKT3. Interacts (via TRAF domains) with NUMBL (via C-terminal). Interacts with RBCK1. Interacts with LIMD1 (via LIM domains). Interacts with RSAD2/viperin. Interacts (via C-terminus) with EIF2AK2/PKR (via the kinase catalytic domain). Interacts with ZFAND5. Interacts with IL1RL1. Interacts with TRAFD1. Interacts with AJUBA. Interacts with MAVS/IPS1. Interacts (via TRAF domains) with DYNC2I2 (via WD domains). Interacts with IFIT3 (via N-terminus). Interacts with TICAM2. Interacts with CARD14. Interacts with CD40 and MAP3K8; the interaction is required for ERK activation. Interacts with TICAM1 and this interaction is enhanced in the presence of WDFY1. Interacts with TANK; this interaction increases in response to DNA damage. Interacts with USP10; this interaction increases in response to DNA damage. Interacts with ZC3H12A; this interaction increases in response to DNA damage and is stimulated by TANK. Interacts with WDFY3. Interacts with TRIM13. Interacts with GPS2. Interacts (via C-terminus) with SASH1. Interacts with LRRC19. Interacts with IL17RA and TRAF3IP2. Interacts with TOMM70. Interacts with AMBRA1; interaction is required to mediate 'Lys-63'-linked ubiquitination of ULK1. Interacts with CRBN; this interaction inhibits TLR4-mediated signaling by preventing TRAF6-mediated ubiquitination of ECSIT. In terms of processing, sumoylated on Lys-125, Lys-143 and Lys-473 with SUMO1. Polyubiquitinated on Lys-125 by TRAF3IP2; after cell stimulation with IL17A. Polyubiquitinated on Lys-125; after cell stimulation with IL1B or TGFB. This ligand-induced cell stimulation leads to dimerization/oligomerization of TRAF6 molecules, followed by auto-ubiquitination which involves UBE2N and UBE2V1 and leads to TRAF6 activation. This 'Lys-63' site-specific poly-ubiquitination appears to be associated with the activation of signaling molecules. Endogenous autoubiquitination occurs only for the cytoplasmic form. Deubiquitinated by USP10 in a TANK-dependent manner, leading to the negative regulation of NF-kappa-B signaling upon DNA damage. LRRC19 induces 'Lys-63' ubiquitination. Ubiquitinated at Lys-339 by the SCF(FBXL2) complex, leading to its degradation by the proteasome.

It localises to the cytoplasm. Its subcellular location is the cell cortex. The protein resides in the nucleus. The protein localises to the lipid droplet. The enzyme catalyses S-ubiquitinyl-[E2 ubiquitin-conjugating enzyme]-L-cysteine + [acceptor protein]-L-lysine = [E2 ubiquitin-conjugating enzyme]-L-cysteine + N(6)-ubiquitinyl-[acceptor protein]-L-lysine.. It functions in the pathway protein modification; protein ubiquitination. Functionally, E3 ubiquitin ligase that, together with UBE2N and UBE2V1, mediates the synthesis of 'Lys-63'-linked-polyubiquitin chains conjugated to proteins, such as ECSIT, IKBKG, IRAK1, AKT1 and AKT2. Also mediates ubiquitination of free/unanchored polyubiquitin chain that leads to MAP3K7 activation. Leads to the activation of NF-kappa-B and JUN. Seems to also play a role in dendritic cells (DCs) maturation and/or activation. Represses c-Myb-mediated transactivation, in B-lymphocytes. Adapter protein that seems to play a role in signal transduction initiated via TNF receptor, IL-1 receptor and IL-17 receptor. Regulates osteoclast differentiation by mediating the activation of adapter protein complex 1 (AP-1) and NF-kappa-B, in response to RANK-L stimulation. Together with MAP3K8, mediates CD40 signals that activate ERK in B-cells and macrophages, and thus may play a role in the regulation of immunoglobulin production. Acts as a regulator of the JNK and NF-kappa-B signaling pathways by initiating assembly of heterotypic 'Lys-63'-/'Lys-48'-linked branched ubiquitin chains that are then recognized by TAB2: TRAF6 catalyzes initial 'Lys-63'-linked-polyubiquitin chains that are then branched via 'Lys-48'-linked polyubiquitin by HUWE1. 'Lys-63'-/'Lys-48'-linked branched ubiquitin chains protect 'Lys-63'-linkages from CYLD deubiquitination. Also participates in the TCR signaling by ubiquitinating LAT. The sequence is that of TNF receptor-associated factor 6 (TRAF6) from Bos taurus (Bovine).